The primary structure comprises 333 residues: UDP-N-acetylenolpyruvoylglucosamine reductase (333 aa).

Residues 12–176 (LPAQCRALIE…TSVVFRLPKD (165 aa)) enclose the FAD-binding PCMH-type domain. The active site involves R153. S221 acts as the Proton donor in catalysis. E317 is a catalytic residue.

The protein belongs to the MurB family. The cofactor is FAD.

The protein resides in the cytoplasm. The catalysed reaction is UDP-N-acetyl-alpha-D-muramate + NADP(+) = UDP-N-acetyl-3-O-(1-carboxyvinyl)-alpha-D-glucosamine + NADPH + H(+). It participates in cell wall biogenesis; peptidoglycan biosynthesis. Its function is as follows. Cell wall formation. This chain is UDP-N-acetylenolpyruvoylglucosamine reductase, found in Idiomarina loihiensis (strain ATCC BAA-735 / DSM 15497 / L2-TR).